The following is a 610-amino-acid chain: Elongation factor 4 (610 aa).

A tr-type G domain is found at 13–195 (SHIRNFSIVA…AIVRKLPAPK (183 aa)). GTP contacts are provided by residues 25 to 30 (DHGKST) and 142 to 145 (NKID).

Belongs to the TRAFAC class translation factor GTPase superfamily. Classic translation factor GTPase family. LepA subfamily.

It localises to the cell inner membrane. The enzyme catalyses GTP + H2O = GDP + phosphate + H(+). Functionally, required for accurate and efficient protein synthesis under certain stress conditions. May act as a fidelity factor of the translation reaction, by catalyzing a one-codon backward translocation of tRNAs on improperly translocated ribosomes. Back-translocation proceeds from a post-translocation (POST) complex to a pre-translocation (PRE) complex, thus giving elongation factor G a second chance to translocate the tRNAs correctly. Binds to ribosomes in a GTP-dependent manner. This chain is Elongation factor 4, found in Rhizobium etli (strain CIAT 652).